The chain runs to 408 residues: Mitochondrial outer membrane protein SLC25A46 (408 aa).

2 disordered regions span residues 1 to 23 (MHPR…EEPC) and 52 to 80 (HWGE…LGAG). Residues 66–76 (LGAAGLNEEPG) show a composition bias toward low complexity. One copy of the Solcar 1 repeat lies at 86-177 (QLNRFAGFGI…GIISEFTPLP (92 aa)). The next 6 helical transmembrane spans lie at 93-113 (FGIG…CIVL), 157-177 (FIVQ…TPLP), 189-209 (IGGH…FYSA), 248-268 (LLPL…HYVI), 304-324 (FPEL…LYPL), and 373-393 (LGFY…VAVL). The stretch at 301 to 403 (DAYFPELIAS…QLTKIIYSTL (103 aa)) is one Solcar 2 repeat.

This sequence belongs to the mitochondrial carrier (TC 2.A.29) family.

The protein localises to the mitochondrion outer membrane. In terms of biological role, transmembrane protein of the mitochondrial outer membrane that controls mitochondrial organization. May regulate the assembly of the MICOS (mitochondrial contact site and cristae organizing system) complex which is essential to the biogenesis and dynamics of mitochondrial cristae, the inwards folds of the inner mitochondrial membrane. Through its interaction with the EMC (endoplasmic reticulum membrane protein complex), could regulate mitochondrial lipid homeostasis and thereby mitochondrial fission. This Gallus gallus (Chicken) protein is Mitochondrial outer membrane protein SLC25A46.